Consider the following 740-residue polypeptide: Probable apyrase 7 (740 aa).

Residues 1–113 (MVFGRITELF…PSTRRKLIRA (113 aa)) are Cytoplasmic-facing. The helical transmembrane segment at 114-134 (VMIVMCLFLFAFLVYIVSMYI) threads the bilayer. Residues 135–581 (YTNWSRGASR…LKSYETLSMK (447 aa)) lie on the Extracellular side of the membrane. A glycan (N-linked (GlcNAc...) asparagine) is linked at Asn137. ATP is bound at residue 147-157 (VVFDCGSTGTR). Asn208 carries an N-linked (GlcNAc...) asparagine glycan. Glu284 (proton acceptor) is an active-site residue. 309 to 319 (GALDLGGSSLQ) contacts ATP. 4 N-linked (GlcNAc...) asparagine glycosylation sites follow: Asn330, Asn374, Asn439, and Asn484. Residues 582–602 (INPIALISILILSLLLLLCAL) form a helical membrane-spanning segment. Residues 603–740 (SRVSNCLPRF…SLADSHMLKM (138 aa)) lie on the Cytoplasmic side of the membrane. The interval 706 to 740 (FWSSPRRSQMRLQSRRSQSREDLSSSLADSHMLKM) is disordered. The segment covering 708–721 (SSPRRSQMRLQSRR) has biased composition (low complexity).

This sequence belongs to the GDA1/CD39 NTPase family. It depends on Ca(2+) as a cofactor. Detected in mature pollen grains. Also expressed in more diverse tissues such as roots, leaves, stems, pistils and sepals. More particularly expressed in the vascular bundle.

It localises to the membrane. It carries out the reaction a ribonucleoside 5'-triphosphate + 2 H2O = a ribonucleoside 5'-phosphate + 2 phosphate + 2 H(+). Catalyzes the hydrolysis of phosphoanhydride bonds of nucleoside tri- and di-phosphates. Involved in the regulation of pollen and anther development. This Arabidopsis thaliana (Mouse-ear cress) protein is Probable apyrase 7 (APY7).